A 60-amino-acid chain; its full sequence is Large ribosomal subunit protein bL32 (60 aa).

The protein belongs to the bacterial ribosomal protein bL32 family.

The chain is Large ribosomal subunit protein bL32 from Hydrogenobaculum sp. (strain Y04AAS1).